The chain runs to 176 residues: Large ribosomal subunit protein uL16 (176 aa).

It belongs to the universal ribosomal protein uL16 family.

This chain is Large ribosomal subunit protein uL16, found in Thermoplasma volcanium (strain ATCC 51530 / DSM 4299 / JCM 9571 / NBRC 15438 / GSS1).